Reading from the N-terminus, the 255-residue chain is Large ribosomal subunit protein uL4 (255 aa).

This sequence belongs to the universal ribosomal protein uL4 family. As to quaternary structure, part of the 50S ribosomal subunit.

Its function is as follows. One of the primary rRNA binding proteins, this protein initially binds near the 5'-end of the 23S rRNA. It is important during the early stages of 50S assembly. It makes multiple contacts with different domains of the 23S rRNA in the assembled 50S subunit and ribosome. Functionally, forms part of the polypeptide exit tunnel. In Thermococcus kodakarensis (strain ATCC BAA-918 / JCM 12380 / KOD1) (Pyrococcus kodakaraensis (strain KOD1)), this protein is Large ribosomal subunit protein uL4.